The primary structure comprises 347 residues: S-adenosylmethionine:tRNA ribosyltransferase-isomerase (347 aa).

Belongs to the QueA family. As to quaternary structure, monomer.

It localises to the cytoplasm. The enzyme catalyses 7-aminomethyl-7-carbaguanosine(34) in tRNA + S-adenosyl-L-methionine = epoxyqueuosine(34) in tRNA + adenine + L-methionine + 2 H(+). The protein operates within tRNA modification; tRNA-queuosine biosynthesis. In terms of biological role, transfers and isomerizes the ribose moiety from AdoMet to the 7-aminomethyl group of 7-deazaguanine (preQ1-tRNA) to give epoxyqueuosine (oQ-tRNA). This is S-adenosylmethionine:tRNA ribosyltransferase-isomerase from Xylella fastidiosa (strain M23).